A 186-amino-acid polypeptide reads, in one-letter code: Signal peptidase I P (186 aa).

The Cytoplasmic segment spans residues 1-15 (MTKEKVFKKKSSILE). Residues 16 to 35 (WGKAIVIAVILALLIRNFLF) form a helical membrane-spanning segment. Over 36–186 (EPYVVEGKSM…FPFSNMRKAK (151 aa)) the chain is Extracellular. Residues S44 and K86 contribute to the active site.

The protein belongs to the peptidase S26 family.

The protein resides in the cell membrane. It catalyses the reaction Cleavage of hydrophobic, N-terminal signal or leader sequences from secreted and periplasmic proteins.. This Bacillus subtilis subsp. natto protein is Signal peptidase I P (sipP).